The sequence spans 274 residues: ATP synthase subunit delta (274 aa).

This sequence belongs to the ATPase delta chain family. As to quaternary structure, F-type ATPases have 2 components, F(1) - the catalytic core - and F(0) - the membrane proton channel. F(1) has five subunits: alpha(3), beta(3), gamma(1), delta(1), epsilon(1). F(0) has three main subunits: a(1), b(2) and c(10-14). The alpha and beta chains form an alternating ring which encloses part of the gamma chain. F(1) is attached to F(0) by a central stalk formed by the gamma and epsilon chains, while a peripheral stalk is formed by the delta and b chains.

The protein resides in the cell membrane. Functionally, f(1)F(0) ATP synthase produces ATP from ADP in the presence of a proton or sodium gradient. F-type ATPases consist of two structural domains, F(1) containing the extramembraneous catalytic core and F(0) containing the membrane proton channel, linked together by a central stalk and a peripheral stalk. During catalysis, ATP synthesis in the catalytic domain of F(1) is coupled via a rotary mechanism of the central stalk subunits to proton translocation. In terms of biological role, this protein is part of the stalk that links CF(0) to CF(1). It either transmits conformational changes from CF(0) to CF(1) or is implicated in proton conduction. The polypeptide is ATP synthase subunit delta (Streptomyces coelicolor (strain ATCC BAA-471 / A3(2) / M145)).